The chain runs to 158 residues: Naphthalene 1,2-dioxygenase system, small oxygenase component (158 aa).

The protein belongs to the bacterial ring-hydroxylating dioxygenase beta subunit family. The naphthalene dioxygenase (NDO) multicomponent enzyme system is composed of an electron transfer component and a dioxygenase component (iron sulfur protein (ISP)). The electron transfer component is composed of a ferredoxin reductase (NdoR) and a ferredoxin (NdoA), and the dioxygenase component is formed of a heterohexamer (trimer of heterodimers) of three large alpha subunits (NdoB) and three small beta subunits (NdoC).

Its pathway is aromatic compound metabolism; naphthalene degradation. Functionally, component of the naphthalene dioxygenase (NDO) multicomponent enzyme system which catalyzes the incorporation of both atoms of molecular oxygen into naphthalene to form cis-(1R,2S)-dihydroxy-1,2-dihydronaphthalene. The beta subunit seems to have a structural role in the holoenzyme. The sequence is that of Naphthalene 1,2-dioxygenase system, small oxygenase component from Pseudomonas fluorescens.